The following is a 133-amino-acid chain: MSFVKEFREFAMRGNVVDMAVGVIIGGAFGKIVSSLVGDVVMPVLGILTGGVDFKDLSIVLKEAAGEVPAVTLNYGAFIQTVFDFVIIAFAIFLMIKALNKLKREEPKVEEPAEPKLSNEEVLLTEIRDLLKK.

2 helical membrane-spanning segments follow: residues 10 to 30 (FAMR…GAFG) and 76 to 96 (GAFI…FLMI).

Belongs to the MscL family. Homopentamer.

It localises to the cell inner membrane. In terms of biological role, channel that opens in response to stretch forces in the membrane lipid bilayer. May participate in the regulation of osmotic pressure changes within the cell. In Pasteurella multocida (strain Pm70), this protein is Large-conductance mechanosensitive channel.